Here is a 138-residue protein sequence, read N- to C-terminus: ATP synthase epsilon chain (138 aa).

This sequence belongs to the ATPase epsilon chain family. In terms of assembly, F-type ATPases have 2 components, CF(1) - the catalytic core - and CF(0) - the membrane proton channel. CF(1) has five subunits: alpha(3), beta(3), gamma(1), delta(1), epsilon(1). CF(0) has three main subunits: a, b and c.

The protein localises to the cell inner membrane. Produces ATP from ADP in the presence of a proton gradient across the membrane. The sequence is that of ATP synthase epsilon chain from Psychrobacter arcticus (strain DSM 17307 / VKM B-2377 / 273-4).